A 163-amino-acid polypeptide reads, in one-letter code: 2-C-methyl-D-erythritol 2,4-cyclodiphosphate synthase (163 aa).

A divalent metal cation is bound by residues aspartate 8 and histidine 10. Residues 8–10 (DVH) and 34–35 (HS) contribute to the 4-CDP-2-C-methyl-D-erythritol 2-phosphate site. Histidine 42 provides a ligand contact to a divalent metal cation. 4-CDP-2-C-methyl-D-erythritol 2-phosphate is bound by residues 56-58 (DIG), 132-135 (TTTE), phenylalanine 139, and arginine 142.

It belongs to the IspF family. As to quaternary structure, homotrimer. It depends on a divalent metal cation as a cofactor.

The enzyme catalyses 4-CDP-2-C-methyl-D-erythritol 2-phosphate = 2-C-methyl-D-erythritol 2,4-cyclic diphosphate + CMP. The protein operates within isoprenoid biosynthesis; isopentenyl diphosphate biosynthesis via DXP pathway; isopentenyl diphosphate from 1-deoxy-D-xylulose 5-phosphate: step 4/6. In terms of biological role, involved in the biosynthesis of isopentenyl diphosphate (IPP) and dimethylallyl diphosphate (DMAPP), two major building blocks of isoprenoid compounds. Catalyzes the conversion of 4-diphosphocytidyl-2-C-methyl-D-erythritol 2-phosphate (CDP-ME2P) to 2-C-methyl-D-erythritol 2,4-cyclodiphosphate (ME-CPP) with a corresponding release of cytidine 5-monophosphate (CMP). This is 2-C-methyl-D-erythritol 2,4-cyclodiphosphate synthase from Moorella thermoacetica (strain ATCC 39073 / JCM 9320).